Here is a 286-residue protein sequence, read N- to C-terminus: Flagellar filament 31.3 kDa core protein (286 aa).

This sequence belongs to the bacterial flagellin family. In terms of assembly, the core of the flagellum consists of several antigenically related polypeptides. Post-translationally, glycosylated. Glycosylation is not essential for motility.

The protein localises to the periplasmic flagellum. It is found in the periplasm. In terms of biological role, component of the core of the flagella. The polypeptide is Flagellar filament 31.3 kDa core protein (flaB2) (Treponema maltophilum).